A 404-amino-acid polypeptide reads, in one-letter code: Serine/threonine transporter SstT (404 aa).

The next 8 helical transmembrane spans lie at 17–37 (IGIGVVIGVMLGILAPDLTGF), 39–59 (ILGKLFVGGLKAIAPLLVFAL), 75–95 (MTLIIVLYLFGTFASALVAVL), 138–158 (ALATANYIGVLSWAIIFGLAL), 179–199 (IVVWIINLAPIGIMSLVFTTI), 212–232 (FLILVLVGTMVFVALVVNPLI), 287–307 (IPLGATINMGGAAITINVLTL), and 313–333 (FGIPIDFLTALLLSVVAAVSA).

The protein belongs to the dicarboxylate/amino acid:cation symporter (DAACS) (TC 2.A.23) family.

It is found in the cell membrane. The catalysed reaction is L-serine(in) + Na(+)(in) = L-serine(out) + Na(+)(out). It carries out the reaction L-threonine(in) + Na(+)(in) = L-threonine(out) + Na(+)(out). Involved in the import of serine and threonine into the cell, with the concomitant import of sodium (symport system). This chain is Serine/threonine transporter SstT, found in Streptococcus pyogenes serotype M2 (strain MGAS10270).